Consider the following 210-residue polypeptide: Thymidylate kinase (210 aa).

14 to 21 (GLDRSGKS) contacts ATP.

Belongs to the thymidylate kinase family.

The catalysed reaction is dTMP + ATP = dTDP + ADP. Its pathway is pyrimidine metabolism; dTTP biosynthesis. Its function is as follows. Catalyzes the conversion of dTMP to dTDP. This chain is Thymidylate kinase (tmp1), found in Schizosaccharomyces pombe (strain 972 / ATCC 24843) (Fission yeast).